Reading from the N-terminus, the 511-residue chain is TNNNNFNNINNNNNNNNNNNNNNNNNNNNNNNNNNNSNNNNNNNNNYNSNNNNNNNNNNNNNNNNNNNNNNNNNNNNNNNNNNNNNNNNNNNNNNNNNNTSFNDNCNNNSNYHNHSNHHPLFESLQNINQYPLSPNNNKSSNQHLSHSSSNVNSQYYQTPYYQPSQKQNSPNSTPPLNGCQYENHNLNSNNTFFKKNTNHYISQQLYQQQFNQNVNNNNNNNNISNNNNNSYNINCNNNNNNNNSNYNNNSYNNNNNYNNNNNNNNNNNNNNNNNNNNNNIFNENNNNNNNNNNNNNNNCNNNYNNNDNNENKYCVPKIEIPQKNLQYSPPPFQLDSGSTTPKTPSAPTSPVLSPKTSNKICDLVLNIVPICQELSNEDGYQNKELLNKIQEYFEDAIREIKKIKKTRLPLMKQNHTKESDDKTFYSLRPRRNRKCTIKTKTLQSSNSEEIVCQACGTRASPEWRKGPDGFKSLCNACGLYYAKTKKRENEIIGQPDLIPKHMKIHNLIND.

Residues 1–111 (TNNNNFNNIN…FNDNCNNNSN (111 aa)) are compositionally biased toward low complexity. Disordered stretches follow at residues 1-194 (TNNN…NTFF), 214-313 (NVNN…NENK), and 325-355 (NLQYSPPPFQLDSGSTTPKTPSAPTSPVLSP). The segment covering 124 to 135 (SLQNINQYPLSP) has biased composition (polar residues). The span at 136 to 166 (NNNKSSNQHLSHSSSNVNSQYYQTPYYQPSQ) shows a compositional bias: low complexity. A compositionally biased stretch (polar residues) spans 167–185 (KQNSPNSTPPLNGCQYENH). Low complexity-rich tracts occupy residues 214–309 (NVNN…NNDN) and 337–351 (SGSTTPKTPSAPTSP). The GATA-type zinc finger occupies 453-478 (CQACGTRASPEWRKGPDGFKSLCNAC).

The protein is GATA zinc finger domain-containing protein 15 (gtaO) of Dictyostelium discoideum (Social amoeba).